The following is a 291-amino-acid chain: tRNA dimethylallyltransferase (291 aa).

5–12 (GPTAGGKS) contacts ATP. Position 7 to 12 (7 to 12 (TAGGKS)) interacts with substrate. The tract at residues 30 to 33 (DSMQ) is interaction with substrate tRNA.

The protein belongs to the IPP transferase family. In terms of assembly, monomer. Mg(2+) is required as a cofactor.

It carries out the reaction adenosine(37) in tRNA + dimethylallyl diphosphate = N(6)-dimethylallyladenosine(37) in tRNA + diphosphate. Functionally, catalyzes the transfer of a dimethylallyl group onto the adenine at position 37 in tRNAs that read codons beginning with uridine, leading to the formation of N6-(dimethylallyl)adenosine (i(6)A). In Frankia casuarinae (strain DSM 45818 / CECT 9043 / HFP020203 / CcI3), this protein is tRNA dimethylallyltransferase.